Here is a 247-residue protein sequence, read N- to C-terminus: DNA polymerase sliding clamp (247 aa).

It belongs to the PCNA family. Homotrimer. The subunits circularize to form a toroid; DNA passes through its center. Replication factor C (RFC) is required to load the toroid on the DNA.

Functionally, sliding clamp subunit that acts as a moving platform for DNA processing. Responsible for tethering the catalytic subunit of DNA polymerase and other proteins to DNA during high-speed replication. The protein is DNA polymerase sliding clamp of Methanosphaerula palustris (strain ATCC BAA-1556 / DSM 19958 / E1-9c).